Here is a 252-residue protein sequence, read N- to C-terminus: Probable transcriptional regulatory protein Kole_1935 (252 aa).

The protein belongs to the TACO1 family.

The protein localises to the cytoplasm. The protein is Probable transcriptional regulatory protein Kole_1935 of Kosmotoga olearia (strain ATCC BAA-1733 / DSM 21960 / TBF 19.5.1).